We begin with the raw amino-acid sequence, 295 residues long: UDP-N-acetylenolpyruvoylglucosamine reductase (295 aa).

An FAD-binding PCMH-type domain is found at 26–189; that stretch reads VGGQADILFK…IEAEFKGVSS (164 aa). The active site involves R169. The Proton donor role is filled by C218. E288 is an active-site residue.

The protein belongs to the MurB family. FAD is required as a cofactor.

It is found in the cytoplasm. The catalysed reaction is UDP-N-acetyl-alpha-D-muramate + NADP(+) = UDP-N-acetyl-3-O-(1-carboxyvinyl)-alpha-D-glucosamine + NADPH + H(+). It functions in the pathway cell wall biogenesis; peptidoglycan biosynthesis. Functionally, cell wall formation. This is UDP-N-acetylenolpyruvoylglucosamine reductase from Wolbachia sp. subsp. Brugia malayi (strain TRS).